A 500-amino-acid chain; its full sequence is Zinc finger protein PLAG1 (500 aa).

Residues 1–30 (MATVIPGDLSEVRDTQKVPSGKRKRGETKP) are disordered. The interaction with KPNA2 stretch occupies residues 2–84 (ATVIPGDLSE…SKYKLQRHMA (83 aa)). A Nuclear localization signal motif is present at residues 22–25 (KRKR). C2H2-type zinc fingers lie at residues 34–56 (FPCQ…SYSH), 62–86 (YKCI…MATH), 92–114 (HKCN…LHTH), 121–143 (FKCE…LALH), 150–172 (LTCK…LKSH), 185–207 (HQCE…MVVH), and 213–236 (FLCQ…KKSH). The interval 41 to 242 (KAFNSVEKLK…KKSHNQELLK (202 aa)) is decreased nuclear import with localization in the nucleus but also in the cytoplasm. The tract at residues 243–384 (VKTEPVDFLD…QASSSSKLGL (142 aa)) is repression domain; contains 3 sumoylation motifs and massively decrease transcription activity. Residues 243–500 (VKTEPVDFLD…TLPRFHQAFQ (258 aa)) form an activates transcription; Inhibition of nuclear import due to lack of NLS and KPNA2 interaction region. Residues lysine 244 and lysine 263 each participate in a glycyl lysine isopeptide (Lys-Gly) (interchain with G-Cter in SUMO) cross-link. The tract at residues 365–388 (GGVPSSSQDSQASSSSKLGLDPQI) is disordered. The segment covering 369 to 380 (SSSQDSQASSSS) has biased composition (low complexity). The massively activates transcription stretch occupies residues 385 to 500 (DPQIGSLDDG…TLPRFHQAFQ (116 aa)).

This sequence belongs to the krueppel C2H2-type zinc-finger protein family. In terms of assembly, interacts with KPNA2, which escorts protein to the nucleus via interaction with nuclear localization signal. Interacts with E3 SUMO-protein ligase PIAS1, PIAS2 and PIAS4. Sumoylated with SUMO1; which inhibits transcriptional activity, but does not affect nuclear localization. Blockers of sumoylation pathway such as SENP3 and inactive UBE2I increases transcriptional capacity. Sumoylation is increased in the presence of PIAS1. In terms of processing, acetylated by lysine acetyltransferase EP300; which activates transcriptional capacity. Lysine residues that are sumoylated also seem to be target for acetylation. As to expression, expressed in fetal tissues such as lung, liver and kidney. Not detected or weak detection in normal adult tissues, but highly expressed in salivary gland with benign or malignant pleiomorphic adenomas with or without 8q12 aberrations, with preferential occurrence in benign tumors.

The protein resides in the nucleus. Its function is as follows. Transcription factor whose activation results in up-regulation of target genes, such as IGFII, leading to uncontrolled cell proliferation: when overexpressed in cultured cells, higher proliferation rate and transformation are observed. Other target genes such as CRLF1, CRABP2, CRIP2, PIGF are strongly induced in cells with PLAG1 induction. Proto-oncogene whose ectopic expression can trigger the development of pleomorphic adenomas of the salivary gland and lipoblastomas. Overexpression is associated with up-regulation of IGFII, is frequently observed in hepatoblastoma, common primary liver tumor in childhood. Cooperates with CBFB-MYH11, a fusion gene important for myeloid leukemia. This is Zinc finger protein PLAG1 (PLAG1) from Homo sapiens (Human).